We begin with the raw amino-acid sequence, 496 residues long: Hexokinase-2 (496 aa).

Residues 4–24 traverse the membrane as a helical segment; sequence ATVGAVVVGTAAAVAVAALIM. The 453-residue stretch at 35–487 folds into the Hexokinase domain; the sequence is ARARAILKEF…SGIGAALLAA (453 aa). The hexokinase small subdomain stretch occupies residues 90–228; sequence TGDEGGVFYA…EIDMRVSALV (139 aa). Positions 104, 105, and 106 each coordinate ADP. The D-glucose site is built by Thr194, Lys195, Asn229, and Asp230. The segment at 229–476 is hexokinase large subdomain; that stretch reads NDTVGTLAGG…TSIVFKHAND (248 aa). Residue Thr253 coordinates ADP. The D-glucose site is built by Asn256, Glu284, and Glu315. Gly441 contacts ADP.

Belongs to the hexokinase family.

Its subcellular location is the plastid. It localises to the chloroplast outer membrane. The enzyme catalyses a D-hexose + ATP = a D-hexose 6-phosphate + ADP + H(+). It carries out the reaction D-fructose + ATP = D-fructose 6-phosphate + ADP + H(+). It catalyses the reaction D-glucose + ATP = D-glucose 6-phosphate + ADP + H(+). It functions in the pathway carbohydrate metabolism; hexose metabolism. It participates in carbohydrate degradation; glycolysis; D-glyceraldehyde 3-phosphate and glycerone phosphate from D-glucose: step 1/4. In terms of biological role, fructose and glucose phosphorylating enzyme. May be involved in the phosphorylation of glucose during the export from plastids to cytosol. Seems neither to be involved in cell sugar sensing nor in carbohydrate metabolism in tuber. This chain is Hexokinase-2 (HXK2), found in Solanum tuberosum (Potato).